A 1007-amino-acid polypeptide reads, in one-letter code: Glucose transport transcription regulator RGT1 (1007 aa).

Residues 1-11 show a composition bias toward polar residues; it reads MLSALIQNGMS. Residues 1–115 form a disordered region; the sequence is MLSALIQNGM…ESRRRSKVSR (115 aa). A compositionally biased stretch (low complexity) spans 21 to 33; it reads NNTTNGSSSTTDN. Composition is skewed to polar residues over residues 42–65, 74–83, and 96–105; these read NTEN…SKQD, TPRSINTGAS, and VSSNVSTATT. Residues 117 to 151 constitute a DNA-binding region (zn(2)-C6 fungal-type); it reads CDQCRKKKIKCDFIEGHDINPDQSCTGCRKIGEKC. Disordered regions lie at residues 155-224, 267-350, 399-423, and 462-496; these read RIPL…ATST, QRRP…SAIP, LQQQ…SNGG, and AEVE…QNLP. 2 stretches are compositionally biased toward polar residues: residues 196–206 and 274–288; these read SVSNPVNAVNE and SLAS…GKTN. Residues 289–303 are compositionally biased toward low complexity; that stretch reads QQQPLPSQSQPQSLQ. Composition is skewed to polar residues over residues 304 to 323, 329 to 339, and 404 to 419; these read NIGN…TFRN, QPSQDSVSEAG, and SLHS…STGI. Positions 473–489 are enriched in basic residues; it reads QKKRKRSNRSSTSKKGK.

It belongs to the EDS1/RGT1 family.

The protein resides in the nucleus. It localises to the cytoplasm. In terms of biological role, glucose-responsive transcription factor that regulates expression of several glucose transporter (HXT) genes in response to glucose. In the absence of glucose, it functions as a transcriptional repressor, whereas high concentrations of glucose cause it to function as a transcriptional activator. In cells growing on low levels of glucose, has a neutral role, neither repressing nor activating transcription. This is Glucose transport transcription regulator RGT1 (RGT1) from Kluyveromyces lactis (strain ATCC 8585 / CBS 2359 / DSM 70799 / NBRC 1267 / NRRL Y-1140 / WM37) (Yeast).